A 341-amino-acid polypeptide reads, in one-letter code: 4-hydroxy-2-oxovalerate aldolase 3 (341 aa).

In terms of domain architecture, Pyruvate carboxyltransferase spans 5–257 (ITLHDMTLRD…ETGVDVYRIA (253 aa)). 13–14 (RD) contacts substrate. Residue aspartate 14 participates in Mn(2+) binding. Catalysis depends on histidine 17, which acts as the Proton acceptor. Positions 167 and 196 each coordinate substrate. Mn(2+)-binding residues include histidine 196 and histidine 198. A substrate-binding site is contributed by tyrosine 287.

It belongs to the 4-hydroxy-2-oxovalerate aldolase family.

It catalyses the reaction (S)-4-hydroxy-2-oxopentanoate = acetaldehyde + pyruvate. The chain is 4-hydroxy-2-oxovalerate aldolase 3 (bpHI) from Cupriavidus necator (strain ATCC 17699 / DSM 428 / KCTC 22496 / NCIMB 10442 / H16 / Stanier 337) (Ralstonia eutropha).